Consider the following 194-residue polypeptide: Thymidine kinase (194 aa).

ATP is bound by residues 15-22 and 88-91; these read GSMFSGKS and DEVQ. Glutamate 89 (proton acceptor) is an active-site residue. Residues cysteine 145, cysteine 148, cysteine 183, and histidine 186 each coordinate Zn(2+).

The protein belongs to the thymidine kinase family. In terms of assembly, homotetramer.

The protein resides in the cytoplasm. It catalyses the reaction thymidine + ATP = dTMP + ADP + H(+). The polypeptide is Thymidine kinase (Bacillus licheniformis (strain ATCC 14580 / DSM 13 / JCM 2505 / CCUG 7422 / NBRC 12200 / NCIMB 9375 / NCTC 10341 / NRRL NRS-1264 / Gibson 46)).